Consider the following 359-residue polypeptide: MKKTAIALAVALAGFATVAQAAPKDNTWYTGAKLGWSQYHDTGFYGNGYQNGIGNGPTHKDQLGAGAFLGYQANQYLGFELGYDWLGRMPYKGSVNNGAFKAQGVQLAAKLSYPIADDLDIYTRLGGMVWRADSKANYGRTGQRLSDHDTGVSPLAAVGVEYALTKNWATRLDYQFVSNIGDAGTVGARPDNTMLSLGVSYRFGQDDVVAPAPAPAPAPVVETKRFTLKSDVLFNFNKSTLKAEGQQALDQLYTQLSSMDPKDGSVVVLGYTDAVGSDQYNQKLSEQRAQSVVDYLVSKGIPSDKISARGMGEADAVTGNTCGYKSGRATKAQIVCLAPDRRVEIEVKGIKDVVTQPQG.

The first 21 residues, 1 to 21 (MKKTAIALAVALAGFATVAQA), serve as a signal peptide directing secretion. Transmembrane regions (beta stranded) follow at residues 27-37 (TWYTGAKLGWS), 62-73 (QLGAGAFLGYQA), 77-85 (LGFELGYDW), 103-114 (QGVQLAAKLSYP), 119-127 (LDIYTRLGG), 154-163 (PLAAVGVEYA), 168-175 (WATRLDYQ), and 194-202 (MLSLGVSYR). Repeat copies occupy residues 210-211 (AP), 212-213 (AP), 214-215 (AP), 216-217 (AP), and 218-219 (AP). Residues 210–219 (APAPAPAPAP) are 5 X 2 AA tandem repeats of A-P. An OmpA-like domain is found at 221-351 (VETKRFTLKS…RVEIEVKGIK (131 aa)). A disulfide bridge connects residues Cys322 and Cys336.

Belongs to the outer membrane OOP (TC 1.B.6) superfamily. OmpA family. In terms of assembly, monomer and homodimer.

The protein localises to the cell outer membrane. In terms of biological role, with TolR probably plays a role in maintaining the position of the peptidoglycan cell wall in the periplasm. Acts as a porin with low permeability that allows slow penetration of small solutes; an internal gate slows down solute passage. This is Outer membrane protein A from Serratia marcescens.